A 241-amino-acid chain; its full sequence is Chaperone protein FimC (241 aa).

The first 36 residues, 1-36, serve as a signal peptide directing secretion; that stretch reads MSNKNVNVRKSQEITFCLLAGILMFMAMMVAGRAEA.

The protein belongs to the periplasmic pilus chaperone family.

It is found in the periplasm. Required for the biogenesis of type 1 fimbriae. Binds and interact with FimH. This Escherichia coli (strain K12) protein is Chaperone protein FimC (fimC).